We begin with the raw amino-acid sequence, 197 residues long: Adenine phosphoribosyltransferase (197 aa).

It belongs to the purine/pyrimidine phosphoribosyltransferase family. In terms of assembly, homodimer.

Its subcellular location is the cytoplasm. It catalyses the reaction AMP + diphosphate = 5-phospho-alpha-D-ribose 1-diphosphate + adenine. The protein operates within purine metabolism; AMP biosynthesis via salvage pathway; AMP from adenine: step 1/1. Functionally, catalyzes a salvage reaction resulting in the formation of AMP, that is energically less costly than de novo synthesis. The sequence is that of Adenine phosphoribosyltransferase from Ralstonia nicotianae (strain ATCC BAA-1114 / GMI1000) (Ralstonia solanacearum).